The primary structure comprises 187 residues: Transcriptional repressor NrdR (187 aa).

The tract at residues 1 to 21 (MQCPYCQHTNSRVLESRSSEG) is disordered. The segment at 3–34 (CPYCQHTNSRVLESRSSEGGQSIRRRRECLNC) is a zinc-finger region. Residues 49–139 (ITVIKHDGKK…VYGRFKGIKD (91 aa)) form the ATP-cone domain. Polar residues-rich tracts occupy residues 152–162 (ISSPMSQWSKS) and 170–187 (SQTS…ENSR). Residues 152–187 (ISSPMSQWSKSSTRDRDQSQTSPCLSLTHNGSENSR) form a disordered region.

It belongs to the NrdR family. Zn(2+) serves as cofactor.

Its function is as follows. Negatively regulates transcription of bacterial ribonucleotide reductase nrd genes and operons by binding to NrdR-boxes. This is Transcriptional repressor NrdR from Crocosphaera subtropica (strain ATCC 51142 / BH68) (Cyanothece sp. (strain ATCC 51142)).